The chain runs to 512 residues: MEEFKGYLQKGGFKQQHFLYPLLFQEYIYALAHDQGLNVNASTFTEPPEISGYHNKYSSLLVKRLIKRIYQQNRFIYSVTNSKQNRFVGHNNHFYSQMISEGFSSVVEIPFSPRLVSSLKKKKEIPKYQNLRSIHSLFPFLEDKFTHLTYVSDILIPYPVHLEILVQILQCWIQDVPTLHLLRLLFHEYHNGNNSITPNKSTYGFSKDNPRLYRFLYNSYVVECESIFLFLRKSSSYLRSRSFGPLLERTQFYGKMKHIGVTCCNDFHKSLCLFKDPFMHYVRYQGKSIMASKGTDFLMKKWKSYFVNLWQYRFHFWSEPSRIHINQFPHFSFYFLGYLSSVPINLSYAKSQMLENSFLIETFTQKFETMISIIPMIGSLAKAKFCNLSGNPISKPAWADLSDSDIIDRFGRIYRNLSHYYSGSSKKQTLYRIKYILRLSCARTLARKHKSTVRAFLQRLGSEFFEEFFMEEEKVLSLILARTSYSSHQLSREPVWYLDIVRINDLVNHLDL.

The protein belongs to the intron maturase 2 family. MatK subfamily.

It localises to the plastid. Its subcellular location is the chloroplast. Functionally, usually encoded in the trnK tRNA gene intron. Probably assists in splicing its own and other chloroplast group II introns. In Lemna aequinoctialis (Lesser duckweed), this protein is Maturase K.